Reading from the N-terminus, the 379-residue chain is Homoserine O-acetyltransferase (379 aa).

The disordered stretch occupies residues 1–24 (MSHDTTPPLPATGAWREGDPPGDR). The AB hydrolase-1 domain maps to 60–365 (NAVLVLHALT…ASGHDGFLTE (306 aa)). Ser-165 functions as the Nucleophile in the catalytic mechanism. Residue Arg-236 coordinates substrate. Residues Asp-329 and His-359 contribute to the active site. A substrate-binding site is contributed by Asp-360.

Belongs to the AB hydrolase superfamily. MetX family. Homodimer.

The protein resides in the cytoplasm. The catalysed reaction is L-homoserine + acetyl-CoA = O-acetyl-L-homoserine + CoA. Its pathway is amino-acid biosynthesis; L-methionine biosynthesis via de novo pathway; O-acetyl-L-homoserine from L-homoserine: step 1/1. In terms of biological role, transfers an acetyl group from acetyl-CoA to L-homoserine, forming acetyl-L-homoserine. The polypeptide is Homoserine O-acetyltransferase (Thermobifida fusca (strain YX)).